The chain runs to 190 residues: Large ribosomal subunit protein bL25 (190 aa).

It belongs to the bacterial ribosomal protein bL25 family. CTC subfamily. In terms of assembly, part of the 50S ribosomal subunit; part of the 5S rRNA/L5/L18/L25 subcomplex. Contacts the 5S rRNA. Binds to the 5S rRNA independently of L5 and L18.

Functionally, this is one of the proteins that binds to the 5S RNA in the ribosome where it forms part of the central protuberance. The chain is Large ribosomal subunit protein bL25 from Neisseria meningitidis serogroup C (strain 053442).